Consider the following 398-residue polypeptide: Putative transposase y4qJ (398 aa).

It belongs to the transposase 32 family.

The polypeptide is Putative transposase y4qJ (Sinorhizobium fredii (strain NBRC 101917 / NGR234)).